Reading from the N-terminus, the 465-residue chain is BTB/POZ and MATH domain-containing protein 4 (465 aa).

The segment at 12 to 40 (LQRQNPLQKSEQQRRNFEMPSPPTTTSLS) is disordered. Residues 46–180 (NGSHSFTIKG…DDCLKINCTV (135 aa)) form the MATH domain. The region spanning 216 to 282 (SDITFNVSGE…IYKDALIEDA (67 aa)) is the BTB domain. Disordered regions lie at residues 395–429 (SGGG…INGG) and 441–465 (VNAN…ELED). Low complexity predominate over residues 442 to 458 (NANGSGRNNNDNNNSDD).

The protein belongs to the Tdpoz family. In terms of assembly, interacts with RAP2-4. Binds to MYB56 at the promoter of FLOWERING LOCUS T (FT). In terms of tissue distribution, ubiquitous.

It localises to the cytoplasm. The protein operates within protein modification; protein ubiquitination. Its function is as follows. May act as a substrate-specific adapter of an E3 ubiquitin-protein ligase complex (CUL3-RBX1-BTB) which mediates the ubiquitination and subsequent proteasomal degradation of target proteins. The protein is BTB/POZ and MATH domain-containing protein 4 (BPM4) of Arabidopsis thaliana (Mouse-ear cress).